Consider the following 442-residue polypeptide: D-galactonate dehydratase family member SSBG_02010 (442 aa).

Residue D246 participates in Mg(2+) binding. Position 248 (H248) interacts with D-arabinonate. Mg(2+) is bound by residues E272 and E298. D-arabinonate-binding residues include E298, R319, H348, and E375.

The protein belongs to the mandelate racemase/muconate lactonizing enzyme family. GalD subfamily.

Its function is as follows. Has no detectable activity with D-mannonate and with a panel of 70 other acid sugars (in vitro), in spite of the conservation of the residues that are expected to be important for catalytic activity and cofactor binding. May have evolved a divergent function. The polypeptide is D-galactonate dehydratase family member SSBG_02010 (Streptomyces sp. (strain SPB074)).